Reading from the N-terminus, the 301-residue chain is MNNPLPDVALTEVSSALVSLDWVGMQGVEVPVRLAEAGVRYPVHAHVDLQVDLADPSVKGIHMSRLYRLLDRYAEHQILSPDTLGALLEAMVESHLDCHSSRARLTLSFNLLCRRPALITEGLSGWKSYPVKLDATWHAGRLCLDVSADITYSSTCPCSAALSRQLLEGAFTARFGRQSFVDPMQVATWLRENASFATPHSQRSVATVQVRVAEQATELGLMTLIDAVEQALGTPVQTAVKRADEQAFARLNGQNLMYVEDAARKVQQALEGRYAASSVSVRHFESLHPHDAAAQTSNYLS.

This sequence belongs to the GTP cyclohydrolase IV family.

The catalysed reaction is GTP + H2O = 7,8-dihydroneopterin 3'-triphosphate + formate + H(+). Its pathway is cofactor biosynthesis; 7,8-dihydroneopterin triphosphate biosynthesis; 7,8-dihydroneopterin triphosphate from GTP: step 1/1. Converts GTP to 7,8-dihydroneopterin triphosphate. The chain is GTP cyclohydrolase FolE2 from Pseudomonas savastanoi pv. phaseolicola (strain 1448A / Race 6) (Pseudomonas syringae pv. phaseolicola (strain 1448A / Race 6)).